Here is a 425-residue protein sequence, read N- to C-terminus: Glutamyl-tRNA reductase (425 aa).

Residues 51 to 54 (TCNR), Ser111, 116 to 118 (DMQ), and Gln122 each bind substrate. The active-site Nucleophile is Cys52. 191–196 (GLGEIG) is a binding site for NADP(+).

It belongs to the glutamyl-tRNA reductase family. As to quaternary structure, homodimer.

It catalyses the reaction (S)-4-amino-5-oxopentanoate + tRNA(Glu) + NADP(+) = L-glutamyl-tRNA(Glu) + NADPH + H(+). The protein operates within porphyrin-containing compound metabolism; protoporphyrin-IX biosynthesis; 5-aminolevulinate from L-glutamyl-tRNA(Glu): step 1/2. In terms of biological role, catalyzes the NADPH-dependent reduction of glutamyl-tRNA(Glu) to glutamate 1-semialdehyde (GSA). This Cytophaga hutchinsonii (strain ATCC 33406 / DSM 1761 / CIP 103989 / NBRC 15051 / NCIMB 9469 / D465) protein is Glutamyl-tRNA reductase.